The primary structure comprises 454 residues: Glutamate mutase epsilon subunit (454 aa).

Arginine 67 provides a ligand contact to L-glutamate. An adenosylcob(III)alamin-binding site is contributed by glycine 69. Arginine 99 is a binding site for L-glutamate. Asparagine 122 contributes to the adenosylcob(III)alamin binding site. Residues 148–149 (RH), glutamate 170, and tyrosine 176 contribute to the L-glutamate site. An adenosylcob(III)alamin-binding site is contributed by proline 179. An L-glutamate-binding site is contributed by tyrosine 180. The adenosylcob(III)alamin site is built by phenylalanine 296, lysine 325, glutamate 329, and isoleucine 333.

Belongs to the methylaspartate mutase GlmE subunit family. In terms of assembly, heterotetramer composed of 2 epsilon subunits (GlmE) and 2 sigma subunits (GlmS). GlmE exists as a homodimer and GlmS as a monomer. Adenosylcob(III)alamin is required as a cofactor.

It catalyses the reaction (2S,3S)-3-methyl-L-aspartate = L-glutamate. The protein operates within amino-acid degradation; L-glutamate degradation via mesaconate pathway; acetate and pyruvate from L-glutamate: step 1/4. Catalyzes the carbon skeleton rearrangement of L-glutamate to L-threo-3-methylaspartate ((2S,3S)-3-methylaspartate). In Shigella dysenteriae serotype 1 (strain Sd197), this protein is Glutamate mutase epsilon subunit.